Here is a 119-residue protein sequence, read N- to C-terminus: Large ribosomal subunit protein uL18 (119 aa).

Positions 54–76 (LTSASTLADDVEGETPTEESRSV) are disordered.

The protein belongs to the universal ribosomal protein uL18 family. In terms of assembly, part of the 50S ribosomal subunit; part of the 5S rRNA/L5/L18/L25 subcomplex. Contacts the 5S and 23S rRNAs.

This is one of the proteins that bind and probably mediate the attachment of the 5S RNA into the large ribosomal subunit, where it forms part of the central protuberance. The sequence is that of Large ribosomal subunit protein uL18 from Salinibacter ruber (strain DSM 13855 / M31).